A 228-amino-acid chain; its full sequence is Small ribosomal subunit protein uS3 (228 aa).

One can recognise a KH type-2 domain in the interval 39 to 107 (VRAYLQDKLK…PVHINIEEIR (69 aa)).

Belongs to the universal ribosomal protein uS3 family. In terms of assembly, part of the 30S ribosomal subunit. Forms a tight complex with proteins S10 and S14.

Its function is as follows. Binds the lower part of the 30S subunit head. Binds mRNA in the 70S ribosome, positioning it for translation. The sequence is that of Small ribosomal subunit protein uS3 from Ectopseudomonas mendocina (strain ymp) (Pseudomonas mendocina).